We begin with the raw amino-acid sequence, 81 residues long: Putative membrane protein insertion efficiency factor (81 aa).

Residues 59–81 (PWNPGGYDPVPPIKTSRSSSMAE) form a disordered region.

The protein belongs to the UPF0161 family.

It is found in the cell inner membrane. Functionally, could be involved in insertion of integral membrane proteins into the membrane. This is Putative membrane protein insertion efficiency factor from Azotobacter vinelandii (strain DJ / ATCC BAA-1303).